Reading from the N-terminus, the 224-residue chain is Ribosomal RNA large subunit methyltransferase E (224 aa).

S-adenosyl-L-methionine-binding residues include Gly-60, Trp-62, Asp-93, Asp-109, and Asp-137. Lys-177 acts as the Proton acceptor in catalysis.

This sequence belongs to the class I-like SAM-binding methyltransferase superfamily. RNA methyltransferase RlmE family.

The protein resides in the cytoplasm. It carries out the reaction uridine(2552) in 23S rRNA + S-adenosyl-L-methionine = 2'-O-methyluridine(2552) in 23S rRNA + S-adenosyl-L-homocysteine + H(+). Specifically methylates the uridine in position 2552 of 23S rRNA at the 2'-O position of the ribose in the fully assembled 50S ribosomal subunit. The chain is Ribosomal RNA large subunit methyltransferase E from Polynucleobacter asymbioticus (strain DSM 18221 / CIP 109841 / QLW-P1DMWA-1) (Polynucleobacter necessarius subsp. asymbioticus).